A 228-amino-acid polypeptide reads, in one-letter code: Cytidylate kinase (228 aa).

17–25 contributes to the ATP binding site; that stretch reads GPTASGKGT.

This sequence belongs to the cytidylate kinase family. Type 1 subfamily.

It is found in the cytoplasm. It catalyses the reaction CMP + ATP = CDP + ADP. The catalysed reaction is dCMP + ATP = dCDP + ADP. The polypeptide is Cytidylate kinase (Burkholderia cenocepacia (strain HI2424)).